The sequence spans 317 residues: Glutaminase (317 aa).

Substrate is bound by residues serine 67, asparagine 118, glutamate 162, asparagine 169, tyrosine 193, tyrosine 245, and valine 263.

The protein belongs to the glutaminase family. In terms of assembly, homotetramer.

It carries out the reaction L-glutamine + H2O = L-glutamate + NH4(+). The polypeptide is Glutaminase (Brucella abortus (strain S19)).